We begin with the raw amino-acid sequence, 469 residues long: MFLNRMMKTRTGLYRLYSTLKVPHVEINGIKYKTDPQTTNVTDSIIKLTDRSLHLKESHPVGILRDLIEKKLNSVDNTFKIFNNFKPVVTTMENFDSLGFPKDHPGRSKSDTYYINETHLLRTHTSAHELECFQKIRNDSDNIKSGFLISADVYRRDEIDKTHYPVFHQMEGATIWKRTKADVGVKEPMYIEKIREDIRQVENLLNKENVKITVDDDTIPLKENNPKQEYMSDLEVDLCSQHLKRSIELIVSEVFNKKISSMIKNKANNTPKELKVRWINAYFPWTAPSWEIEVWWQGEWLELCGCGLIRQDVLLRAGYKPSETIGWAFGLGLDRIAMLLFEIPDIRLLWSRDERFSRQFSKGLITSFKPYSKHPGSFRDVAFWLPEDKPDIHQVHENDLMEIIRNIAGDLVESVKLVDSFTHPKTGRKSMCYRINYQSMDRNLTNAEVNTLQDMVCSKLVKEYSVELR.

The transit peptide at 1–17 (MFLNRMMKTRTGLYRLY) directs the protein to the mitochondrion. Substrate-binding positions include 126-129 (SAHE), Arg155, 162-164 (THY), 169-171 (QME), Glu302, and Phe329. Residues 372-469 (SKHPGSFRDV…LVKEYSVELR (98 aa)) form the FDX-ACB domain.

This sequence belongs to the class-II aminoacyl-tRNA synthetase family. In terms of assembly, monomer.

The protein localises to the mitochondrion matrix. It carries out the reaction tRNA(Phe) + L-phenylalanine + ATP = L-phenylalanyl-tRNA(Phe) + AMP + diphosphate + H(+). Its function is as follows. Is responsible for the charging of tRNA(Phe) with phenylalanine in mitochondrial translation. This is Phenylalanine--tRNA ligase, mitochondrial (MSF1) from Saccharomyces cerevisiae (strain ATCC 204508 / S288c) (Baker's yeast).